Reading from the N-terminus, the 361-residue chain is D-alanine--D-alanine ligase (361 aa).

The region spanning 149 to 353 (KKLMAAEGLP…YEELLDVLVQ (205 aa)) is the ATP-grasp domain. ATP is bound at residue 176–231 (KKLLGLPVFVKPARGGSSIGISKVSRWEDLPAAVDLARQHDEKVIVESEIVGPEVE). Residues aspartate 308, glutamate 320, and asparagine 322 each coordinate Mg(2+).

This sequence belongs to the D-alanine--D-alanine ligase family. Requires Mg(2+) as cofactor. Mn(2+) serves as cofactor.

It is found in the cytoplasm. It carries out the reaction 2 D-alanine + ATP = D-alanyl-D-alanine + ADP + phosphate + H(+). The protein operates within cell wall biogenesis; peptidoglycan biosynthesis. Cell wall formation. The polypeptide is D-alanine--D-alanine ligase (Corynebacterium efficiens (strain DSM 44549 / YS-314 / AJ 12310 / JCM 11189 / NBRC 100395)).